The primary structure comprises 143 residues: Boletus edulis lectin (143 aa).

Beta-D-Gal-(1-&gt;3)-alpha-D-GalNAc-binding positions include Ala30, 49–50, and 72–73; these read SG and HN. N-acetyl-alpha-D-galactosamine is bound by residues 49–50 and 72–73; these read SG and HN. N,N'-diacetylchitobiose-binding positions include 79–82, Arg103, and Tyr114; that span reads DVVT. N-acetyl-alpha-D-glucosamine-binding positions include 79-82, Arg103, and Tyr114; that span reads DVVT.

This sequence belongs to the fungal fruit body lectin family. As to quaternary structure, homotetramer.

Its function is as follows. Lectin that recognizes O-linked galactose-beta-1,3-N-acetylgalactosamine, a disaccharide (Thomsen-Friedenreich antigen or T-disaccharide), present on cell surface glycoproteins. Can also bind chitin, N,N'-diacetylchitobiose, N-acetylgalactosamine and N-acetylglucosamine. Inhibits proliferation of colon, breast and liver cancer cell lines (in vitro). This is Boletus edulis lectin from Boletus edulis (King bolete).